The sequence spans 242 residues: Protein HTATIP2 (242 aa).

Ala-2 carries the post-translational modification N-acetylalanine. Residues 2–25 form a required for interaction with elongation factor EEF1A1 region; that stretch reads ADKETLLKLREDFKMQNKSVFILG. NADPH contacts are provided by Ser-27, Gly-28, Glu-29, Thr-30, Arg-52, Arg-53, Leu-92, Gly-93, Tyr-143, Lys-147, Leu-170, and Arg-178. The active-site Proton acceptor is Tyr-143. Lys-147 is a catalytic residue.

As to quaternary structure, monomer. Forms homodimers during oxidative stress. Interacts (via N-terminus) with elongation factor EEF1A1 (via middle-region); the interaction is direct and competes with EEF1A1 binding to guanyl-nucleotide exchange factor EEF1B2, thereby inhibiting GDP for GTP exchange and reactivation of EEF1A1. Interacts with nuclear transport receptors XPO4, IPO5/RANBP5, IPO7, IPO9 and KPNB1 as well as GCN1L1/GCN1 and LRPPRC probably through their HEAT repeats. Binds NCOA5/CIA.

Its function is as follows. Represses translation by preventing reactivation of elongation factor eEF1A. May also inhibit nuclear import by competing with nuclear import substrates for binding to a subset of nuclear transport receptors. Has additionally been proposed to act as a redox sensor involved in cellular oxidative stress surveillance. May bind NADPH. This Rattus norvegicus (Rat) protein is Protein HTATIP2.